Reading from the N-terminus, the 301-residue chain is tRNA dimethylallyltransferase 2 (301 aa).

11–18 provides a ligand contact to ATP; it reads GATASGKT. 13–18 contributes to the substrate binding site; the sequence is TASGKT. The tract at residues 36 to 39 is interaction with substrate tRNA; sequence DSRQ.

It belongs to the IPP transferase family. As to quaternary structure, monomer. Mg(2+) is required as a cofactor.

The enzyme catalyses adenosine(37) in tRNA + dimethylallyl diphosphate = N(6)-dimethylallyladenosine(37) in tRNA + diphosphate. Functionally, catalyzes the transfer of a dimethylallyl group onto the adenine at position 37 in tRNAs that read codons beginning with uridine, leading to the formation of N6-(dimethylallyl)adenosine (i(6)A). This Shewanella sediminis (strain HAW-EB3) protein is tRNA dimethylallyltransferase 2.